The sequence spans 82 residues: MRLVVCLVFLASFALVCQGQVYKGGYTRPIPRPPPFVRPLPGGPIGPYNGCPISCRGISFSQARSCCSRLGRCCHVGKGYSG.

Positions methionine 1–glycine 19 are cleaved as a signal peptide. Position 20 is a pyrrolidone carboxylic acid (glutamine 20). 3 cysteine pairs are disulfide-bonded: cysteine 51–cysteine 66, cysteine 55–cysteine 73, and cysteine 67–cysteine 74. Serine 81 is subject to Serine amide.

It belongs to the penaeidin family.

It localises to the cytoplasmic granule. Antibacterial and antifungal activity. Presents chitin-binding activity. This Penaeus vannamei (Whiteleg shrimp) protein is Penaeidin-3d.